We begin with the raw amino-acid sequence, 295 residues long: Host-inducible protein A (295 aa).

A disordered region spans residues 1–20 (MHLDRSDSNGGSSRYTLDHE).

The protein belongs to the NopP family.

The protein is Host-inducible protein A of Rhizobium fredii (Sinorhizobium fredii).